Reading from the N-terminus, the 1142-residue chain is Enamelin (1142 aa).

The first 38 residues, 1–38 (MLLSCRHGASSPKLDNLVPSGKMKILLVFLGLLCYSAA), serve as a signal peptide directing secretion. Residue serine 53 is modified to Phosphoserine. Disordered stretches follow at residues 90–347 (YQMP…FYRN), 374–513 (YRRV…IIPK), 543–587 (TEGI…LSHG), and 603–662 (RENS…FPGQ). A compositionally biased stretch (pro residues) spans 128-148 (QPQPKTPTPKQPLNEPSPTPT). Phosphoserine is present on residues serine 191 and serine 216. Basic and acidic residues predominate over residues 223–234 (DFEKPKEKDPPK). Polar residues-rich tracts occupy residues 243-303 (SVNT…SQSP) and 381-395 (TARSNPPNYAGNSAN). 4 N-linked (GlcNAc...) asparagine glycosylation sites follow: asparagine 245, asparagine 252, asparagine 264, and asparagine 291. Residues 277–514 (NPRSNPTGQN…QTQTQIIPKG (238 aa)) constitute a propeptide that is removed on maturation. Over residues 431 to 442 (PREKQVSQKERT) the composition is skewed to basic and acidic residues. Residues 453 to 467 (WRNSQDYGINKSNYK) are compositionally biased toward polar residues. An N-linked (GlcNAc...) asparagine glycan is attached at asparagine 462. A Hydroxyproline modification is found at proline 547. The span at 570–582 (FKEDPGRQEEHLP) shows a compositional bias: basic and acidic residues. Positions 666 to 669 (DMEE) are excised as a propeptide. A compositionally biased stretch (polar residues) spans 787–816 (NLYKTPTSSPHQKENQPYSNNSPAGLQKNP). 3 disordered regions span residues 787–820 (NLYKTPTSSPHQKENQPYSNNSPAGLQKNPTWHE), 921–965 (TSIV…SQLS), and 1020–1049 (VFGTPDKEPRPEGIPNEMQGNESERQQQRQ). An N-linked (GlcNAc...) asparagine glycan is attached at asparagine 929. The segment covering 952-965 (LRRSTPCSVKSQLS) has biased composition (polar residues). N-linked (GlcNAc...) asparagine glycosylation is present at asparagine 1040.

Post-translationally, proteolytically cleaved into several smaller polypeptides. Cleavage of N-terminal region of enamelin occurs soon after secretion. In terms of processing, phosphorylated by FAM20C in vitro. In terms of tissue distribution, expressed by secretory-phase ameloblasts. Intact enamelin and large-molecular-weight enamelins are limited to the most superficial layer of the developing enamel matrix, while low-molecular-weight enamelins are observed in deeper enamelin. Preferential localization among the crystallites in rod and interrod enamel.

The protein localises to the secreted. The protein resides in the extracellular space. It is found in the extracellular matrix. Involved in the mineralization and structural organization of enamel. Involved in the extension of enamel during the secretory stage of dental enamel formation. The chain is Enamelin (ENAM) from Sus scrofa (Pig).